A 968-amino-acid polypeptide reads, in one-letter code: RNA polymerase-associated protein RapA (968 aa).

A Helicase ATP-binding domain is found at 164-334 (DVGRRHAPRV…FARLRLLDPN (171 aa)). 177–184 (DEVGLGKT) serves as a coordination point for ATP. A DEAH box motif is present at residues 280–283 (DEAH). Residues 490-662 (RVEWLMGYLT…YLASPVQTEG (173 aa)) form the Helicase C-terminal domain.

The protein belongs to the SNF2/RAD54 helicase family. RapA subfamily. Interacts with the RNAP. Has a higher affinity for the core RNAP than for the holoenzyme. Its ATPase activity is stimulated by binding to RNAP.

Its function is as follows. Transcription regulator that activates transcription by stimulating RNA polymerase (RNAP) recycling in case of stress conditions such as supercoiled DNA or high salt concentrations. Probably acts by releasing the RNAP, when it is trapped or immobilized on tightly supercoiled DNA. Does not activate transcription on linear DNA. Probably not involved in DNA repair. In Shigella sonnei (strain Ss046), this protein is RNA polymerase-associated protein RapA.